An 89-amino-acid chain; its full sequence is Small ribosomal subunit protein uS15 (89 aa).

Residues 1–20 show a composition bias toward basic and acidic residues; it reads MSITAERKAELIKTHARGEA. The tract at residues 1–24 is disordered; that stretch reads MSITAERKAELIKTHARGEADTGS.

It belongs to the universal ribosomal protein uS15 family. In terms of assembly, part of the 30S ribosomal subunit. Forms a bridge to the 50S subunit in the 70S ribosome, contacting the 23S rRNA.

Its function is as follows. One of the primary rRNA binding proteins, it binds directly to 16S rRNA where it helps nucleate assembly of the platform of the 30S subunit by binding and bridging several RNA helices of the 16S rRNA. Functionally, forms an intersubunit bridge (bridge B4) with the 23S rRNA of the 50S subunit in the ribosome. The sequence is that of Small ribosomal subunit protein uS15 from Phenylobacterium zucineum (strain HLK1).